Reading from the N-terminus, the 337-residue chain is MKLSRLALLSVFALASAPSWAESVVTVYSIDGLHDGDNSWYQVQFDAFTKATGITIRYVEGGGGVVVERLAKERTNPQADVLVTAPPFIQRAAAEKLLANFNTDAASAIPDANNLYSPLVKNYLSFIYNSKLLKTAPASWQDLLDGKFKNKLQYSTPGQAADGTAVMLQAFHSFGSKDASFAYLGKLQANNVGPSASTGKLTALVNKGEIYVANGDLQMNLAQMERNPNVKIFWPANDKGERSALAIPYVIGLVQGAPQSENGKKLINFLLSKEAQTRVSELSWGMPVRSDVTPSDEHYKAATAALEGVQSWQPNWDDVAVSLSADISRWHKVTESE.

Residues 1–21 (MKLSRLALLSVFALASAPSWA) form the signal peptide.

Belongs to the bacterial solute-binding protein 1 family.

It localises to the periplasm. Probably part of the PhnSTUV complex (TC 3.A.1.11.5) involved in 2-aminoethylphosphonate import. This Salmonella typhi protein is Putative 2-aminoethylphosphonate-binding periplasmic protein (phnS).